Here is a 135-residue protein sequence, read N- to C-terminus: MVLWQSDLRVSWRAQWLSLLIHGLVAAVILLMPWPLSYTPLWMVLLSLVVFDCVRSQRRINARQGEIRLLMDGRLRWQGQEWSIVKAPWMIKSGMMLRLRSDGGKRQHLWLAADSMDEAEWRDLRRILLQQETQR.

Residues 1–11 (MVLWQSDLRVS) are Cytoplasmic-facing. The tract at residues 1–96 (MVLWQSDLRV…APWMIKSGMM (96 aa)) is not required to inhibit FtsZ or MreB polymerization. The chain crosses the membrane as a helical span at residues 12–32 (WRAQWLSLLIHGLVAAVILLM). The Periplasmic segment spans residues 33–37 (PWPLS). The helical transmembrane segment at 38 to 54 (YTPLWMVLLSLVVFDCV) threads the bilayer. Residues 55–135 (RSQRRINARQ…RILLQQETQR (81 aa)) lie on the Cytoplasmic side of the membrane.

Interacts with MreB and FtsZ; interaction with the latter requires FtsZ residues 33-49.

Its subcellular location is the cell inner membrane. Its function is as follows. A probable inner membrane protein. Has been shown not to be a toxin, no effects on growth are seen in LB or minimal medium up to 6 or 21 hours (respectively) after induction of expression. Interacts with cytoskeletal proteins FtsZ and MreB; inhibits FtsZ GTP-dependent polymerization as well as MreB ATP-dependent polymerization. Restores production of prodigiosin antibiotic (Pig) in Serratia strains with deletions of sdhE-ygfX; overexpression of this protein and CptB also restores Pig production to a slightly lesser extent in Serratia. In Escherichia coli (strain K12), this protein is Inner membrane protein YgfX.